The chain runs to 349 residues: Lipoyl synthase (349 aa).

[4Fe-4S] cluster contacts are provided by C55, C60, C66, C81, C85, C88, and S292. The 215-residue stretch at 67–281 folds into the Radical SAM core domain; the sequence is WESREATFLI…ADFARELGFG (215 aa).

The protein belongs to the radical SAM superfamily. Lipoyl synthase family. [4Fe-4S] cluster serves as cofactor.

The protein resides in the cytoplasm. It carries out the reaction [[Fe-S] cluster scaffold protein carrying a second [4Fe-4S](2+) cluster] + N(6)-octanoyl-L-lysyl-[protein] + 2 oxidized [2Fe-2S]-[ferredoxin] + 2 S-adenosyl-L-methionine + 4 H(+) = [[Fe-S] cluster scaffold protein] + N(6)-[(R)-dihydrolipoyl]-L-lysyl-[protein] + 4 Fe(3+) + 2 hydrogen sulfide + 2 5'-deoxyadenosine + 2 L-methionine + 2 reduced [2Fe-2S]-[ferredoxin]. Its pathway is protein modification; protein lipoylation via endogenous pathway; protein N(6)-(lipoyl)lysine from octanoyl-[acyl-carrier-protein]: step 2/2. Catalyzes the radical-mediated insertion of two sulfur atoms into the C-6 and C-8 positions of the octanoyl moiety bound to the lipoyl domains of lipoate-dependent enzymes, thereby converting the octanoylated domains into lipoylated derivatives. The sequence is that of Lipoyl synthase from Corynebacterium diphtheriae (strain ATCC 700971 / NCTC 13129 / Biotype gravis).